We begin with the raw amino-acid sequence, 274 residues long: Glutamate racemase (274 aa).

Residues 9–10 (DS) and 41–42 (YG) each bind substrate. Cys-72 serves as the catalytic Proton donor/acceptor. Position 73-74 (73-74 (NT)) interacts with substrate. Cys-184 (proton donor/acceptor) is an active-site residue. 185-186 (TH) contributes to the substrate binding site.

Belongs to the aspartate/glutamate racemases family.

It carries out the reaction L-glutamate = D-glutamate. The protein operates within cell wall biogenesis; peptidoglycan biosynthesis. Provides the (R)-glutamate required for cell wall biosynthesis. The sequence is that of Glutamate racemase from Oceanobacillus iheyensis (strain DSM 14371 / CIP 107618 / JCM 11309 / KCTC 3954 / HTE831).